Reading from the N-terminus, the 1131-residue chain is Translation initiation factor IF-2 (1131 aa).

The tract at residues 49-542 is disordered; sequence KFKGSVSSNE…AFIMPKPQQS (494 aa). The segment covering 60-75 has biased composition (basic and acidic residues); sequence KSIDNGKASRVEKPEK. Composition is skewed to polar residues over residues 76–88 and 108–125; these read NNSVTAKADQTPS and SEQNVTTGSTESEDNIQS. Basic and acidic residues predominate over residues 127–138; sequence GDRKYQHTDRRP. Residues 139 to 152 show a composition bias toward polar residues; it reads QGNNGEGPQTSTNS. Composition is skewed to basic and acidic residues over residues 164 to 180 and 223 to 239; these read GDRRPQGQNSGDRRPYN. Positions 411–436 are enriched in gly residues; it reads GQGGYGGRPQGQGSYGGRPQGQGGYA. Basic and acidic residues-rich tracts occupy residues 450 to 479 and 487 to 530; these read KDFDKDKDSGYTRSFDKKRTDPKSGEKSSI and LTKE…DPNR. Residues 632 to 801 enclose the tr-type G domain; that stretch reads KRPPVVCVMG…ILTAEMGELK (170 aa). Positions 641–648 are G1; the sequence is GHVDHGKT. 641-648 is a binding site for GTP; that stretch reads GHVDHGKT. Residues 666–670 are G2; it reads GITQH. The tract at residues 687-690 is G3; it reads DTPG. GTP is bound by residues 687–691 and 741–744; these read DTPGH and NKID. Positions 741–744 are G4; sequence NKID. Residues 777 to 779 are G5; sequence SAH.

This sequence belongs to the TRAFAC class translation factor GTPase superfamily. Classic translation factor GTPase family. IF-2 subfamily.

It is found in the cytoplasm. One of the essential components for the initiation of protein synthesis. Protects formylmethionyl-tRNA from spontaneous hydrolysis and promotes its binding to the 30S ribosomal subunits. Also involved in the hydrolysis of GTP during the formation of the 70S ribosomal complex. The chain is Translation initiation factor IF-2 from Lachnoclostridium phytofermentans (strain ATCC 700394 / DSM 18823 / ISDg) (Clostridium phytofermentans).